The sequence spans 335 residues: Biotin synthase (335 aa).

In terms of domain architecture, Radical SAM core spans 39 to 267; sequence TKIQVCKLIS…ASDVRLSAGR (229 aa). Positions 54, 58, and 61 each coordinate [4Fe-4S] cluster. [2Fe-2S] cluster contacts are provided by cysteine 98, cysteine 130, cysteine 190, and arginine 262.

This sequence belongs to the radical SAM superfamily. Biotin synthase family. As to quaternary structure, homodimer. It depends on [4Fe-4S] cluster as a cofactor. Requires [2Fe-2S] cluster as cofactor.

It carries out the reaction (4R,5S)-dethiobiotin + (sulfur carrier)-SH + 2 reduced [2Fe-2S]-[ferredoxin] + 2 S-adenosyl-L-methionine = (sulfur carrier)-H + biotin + 2 5'-deoxyadenosine + 2 L-methionine + 2 oxidized [2Fe-2S]-[ferredoxin]. Its pathway is cofactor biosynthesis; biotin biosynthesis; biotin from 7,8-diaminononanoate: step 2/2. In terms of biological role, catalyzes the conversion of dethiobiotin (DTB) to biotin by the insertion of a sulfur atom into dethiobiotin via a radical-based mechanism. The chain is Biotin synthase from Nostoc punctiforme (strain ATCC 29133 / PCC 73102).